Here is a 244-residue protein sequence, read N- to C-terminus: Protein crossbronx (244 aa).

The UBC core domain occupies 20–176 (QQEYKILAEY…VQKNIKESKE (157 aa)). Positions 209 to 244 (AGRSKQTEPSAQQANGGHATGLSWVKEGEFKPLSIE) are disordered.

The protein belongs to the ubiquitin-conjugating enzyme family. FTS subfamily.

The protein is Protein crossbronx (cbx) of Drosophila erecta (Fruit fly).